The sequence spans 1041 residues: MKKKNISPSLVLHPLLLLLLPFFAFNSLALKFSPQLLSLLSLKTSLSGPPSAFQDWKVPVNGQNDAVWCSWSGVVCDNVTAQVISLDLSHRNLSGRIPIQIRYLSSLLYLNLSGNSLEGSFPTSIFDLTKLTTLDISRNSFDSSFPPGISKLKFLKVFNAFSNNFEGLLPSDVSRLRFLEELNFGGSYFEGEIPAAYGGLQRLKFIHLAGNVLGGKLPPRLGLLTELQHMEIGYNHFNGNIPSEFALLSNLKYFDVSNCSLSGSLPQELGNLSNLETLFLFQNGFTGEIPESYSNLKSLKLLDFSSNQLSGSIPSGFSTLKNLTWLSLISNNLSGEVPEGIGELPELTTLFLWNNNFTGVLPHKLGSNGKLETMDVSNNSFTGTIPSSLCHGNKLYKLILFSNMFEGELPKSLTRCESLWRFRSQNNRLNGTIPIGFGSLRNLTFVDLSNNRFTDQIPADFATAPVLQYLNLSTNFFHRKLPENIWKAPNLQIFSASFSNLIGEIPNYVGCKSFYRIELQGNSLNGTIPWDIGHCEKLLCLNLSQNHLNGIIPWEISTLPSIADVDLSHNLLTGTIPSDFGSSKTITTFNVSYNQLIGPIPSGSFAHLNPSFFSSNEGLCGDLVGKPCNSDRFNAGNADIDGHHKEERPKKTAGAIVWILAAAIGVGFFVLVAATRCFQKSYGNRVDGGGRNGGDIGPWKLTAFQRLNFTADDVVECLSKTDNILGMGSTGTVYKAEMPNGEIIAVKKLWGKNKENGKIRRRKSGVLAEVDVLGNVRHRNIVRLLGCCTNRDCTMLLYEYMPNGSLDDLLHGGDKTMTAAAEWTALYQIAIGVAQGICYLHHDCDPVIVHRDLKPSNILLDADFEARVADFGVAKLIQTDESMSVVAGSYGYIAPEYAYTLQVDKKSDIYSYGVILLEIITGKRSVEPEFGEGNSIVDWVRSKLKTKEDVEEVLDKSMGRSCSLIREEMKQMLRIALLCTSRSPTDRPPMRDVLLILQEAKPKRKTVGDNVIVVGDVNDVNFEDVCSVDVGHDVKCQRIGV.

The N-terminal stretch at 1–29 (MKKKNISPSLVLHPLLLLLLPFFAFNSLA) is a signal peptide. Residues 30-652 (LKFSPQLLSL…HHKEERPKKT (623 aa)) lie on the Extracellular side of the membrane. Cysteine 69 and cysteine 76 are oxidised to a cystine. N-linked (GlcNAc...) asparagine glycosylation is found at asparagine 78, asparagine 92, and asparagine 111. LRR repeat units lie at residues 80–104 (TAQV…IRYL), 105–128 (SSLL…IFDL), 130–152 (KLTT…ISKL), 154–176 (FLKV…VSRL), 177–199 (RFLE…AYGG), 200–224 (LQRL…LGLL), 225–248 (TELQ…FALL), 250–272 (NLKY…LGNL), 273–296 (SNLE…YSNL), 297–319 (KSLK…GFST), 321–344 (KNLT…IGEL), 345–368 (PELT…LGSN), 369–392 (GKLE…LCHG), 394–416 (KLYK…LTRC), 418–439 (SLWR…GFGS), 440–464 (LRNL…FATA), 466–488 (VLQY…IWKA), 511–535 (CKSF…IGHC), 536–558 (EKLL…EIST), 559–583 (LPSI…FGSS), and 585–607 (TITT…SFAH). The CLE peptide binding stretch occupies residues 186-188 (GSY). The tract at residues 233 to 235 (GYN) is CLE peptide binding. N-linked (GlcNAc...) asparagine glycans are attached at residues asparagine 258 and asparagine 271. The interval 303-307 (DFSSN) is CLE peptide binding. Asparagine 322, asparagine 332, and asparagine 356 each carry an N-linked (GlcNAc...) asparagine glycan. The interval 375-377 (DVS) is CLE peptide binding. N-linked (GlcNAc...) asparagine glycosylation is present at asparagine 378. Cysteine 390 and cysteine 416 are oxidised to a cystine. Residues 421–423 (RFR) are CLE peptide binding. 5 N-linked (GlcNAc...) asparagine glycosylation sites follow: asparagine 430, asparagine 442, asparagine 471, asparagine 525, and asparagine 542. Cysteine 511 and cysteine 535 are oxidised to a cystine. N-linked (GlcNAc...) asparagine glycosylation occurs at asparagine 590. Cysteine 620 and cysteine 628 form a disulfide bridge. The helical transmembrane segment at 653–673 (AGAIVWILAAAIGVGFFVLVA) threads the bilayer. The Cytoplasmic segment spans residues 674–1041 (ATRCFQKSYG…HDVKCQRIGV (368 aa)). Threonine 710 is subject to Phosphothreonine. Residues 719–1001 (SKTDNILGMG…DVLLILQEAK (283 aa)) enclose the Protein kinase domain. Residues 725 to 733 (LGMGSTGTV) and lysine 747 contribute to the ATP site. Residues tyrosine 798 and tyrosine 839 each carry the phosphotyrosine modification. The active-site Proton acceptor is the aspartate 852. Phosphoserine is present on serine 884. Residues tyrosine 892 and tyrosine 899 each carry the phosphotyrosine modification. A Phosphothreonine modification is found at threonine 900.

This sequence belongs to the protein kinase superfamily. Ser/Thr protein kinase family. In terms of assembly, interacts specifically with the mature peptides CLE41p and CLE44p, especially in the presence of SERK2. Interacts with LURE1.2. Widely expressed along the vascular strands. In roots and hypocotyls, confined to procambial cells.

Its subcellular location is the cell membrane. The enzyme catalyses L-seryl-[protein] + ATP = O-phospho-L-seryl-[protein] + ADP + H(+). It carries out the reaction L-threonyl-[protein] + ATP = O-phospho-L-threonyl-[protein] + ADP + H(+). Acts with CLE41p and CLE44p peptides as a ligand-receptor pair in a signal transduction pathway involved in the regulation of procambium maintenance and polarity during vascular-tissue development. Mediates repression of tracheary element differentiation and the promotion of procambial cells formation and polar division adjacent to phloem cells in the veins. The polypeptide is Leucine-rich repeat receptor-like protein kinase TDR (Arabidopsis thaliana (Mouse-ear cress)).